Reading from the N-terminus, the 257-residue chain is UPF0246 protein Daro_2893 (257 aa).

It belongs to the UPF0246 family.

The protein is UPF0246 protein Daro_2893 of Dechloromonas aromatica (strain RCB).